A 314-amino-acid chain; its full sequence is Ribonuclease Z (314 aa).

Zn(2+) is bound by residues histidine 62, histidine 64, aspartate 66, histidine 67, histidine 144, aspartate 215, and histidine 273. The Proton acceptor role is filled by aspartate 66.

This sequence belongs to the RNase Z family. As to quaternary structure, homodimer. Zn(2+) is required as a cofactor.

It catalyses the reaction Endonucleolytic cleavage of RNA, removing extra 3' nucleotides from tRNA precursor, generating 3' termini of tRNAs. A 3'-hydroxy group is left at the tRNA terminus and a 5'-phosphoryl group is left at the trailer molecule.. Zinc phosphodiesterase, which displays some tRNA 3'-processing endonuclease activity. Probably involved in tRNA maturation, by removing a 3'-trailer from precursor tRNA. This chain is Ribonuclease Z, found in Prochlorococcus marinus (strain NATL1A).